A 267-amino-acid polypeptide reads, in one-letter code: MTRRNNGHSARFLVASASWFSHHSGMIREPSRDRPGRSPAVAPSFQHERALLKRGVWPVAGCDEVGRGPLAGPVVAAAVVLDPKRIPKGIDDSKRLTAARREELFEEITATASFAVAFASTARIDRDNILRASLWALARAVHALPDMPRHVFVDGRDRIEIACACEPVIGGDGIVLSIAAASIVAKVTRDRLMCKLAQDCPGYGFETHKGYGVPAHLEALGRLGPSPHHRSFFAPVVAARERHRAPPIGESASATETSAGISIEATI.

Residues 57–245 (WPVAGCDEVG…VVAARERHRA (189 aa)) form the RNase H type-2 domain. Residues Asp63, Glu64, and Asp154 each coordinate a divalent metal cation.

Belongs to the RNase HII family. The cofactor is Mn(2+). It depends on Mg(2+) as a cofactor.

It localises to the cytoplasm. The enzyme catalyses Endonucleolytic cleavage to 5'-phosphomonoester.. Functionally, endonuclease that specifically degrades the RNA of RNA-DNA hybrids. The sequence is that of Ribonuclease HII from Nitrobacter hamburgensis (strain DSM 10229 / NCIMB 13809 / X14).